We begin with the raw amino-acid sequence, 249 residues long: NH(3)-dependent NAD(+) synthetase (249 aa).

ATP is bound at residue Gly29–Ser36. Position 35 (Asp35) interacts with Mg(2+). Residue Arg116 coordinates deamido-NAD(+). Residue Thr136 participates in ATP binding. Residue Glu141 coordinates Mg(2+). Residues Lys149 and Asp156 each coordinate deamido-NAD(+). ATP is bound by residues Lys165 and Ser187. Residue His233 to Lys234 participates in deamido-NAD(+) binding.

Belongs to the NAD synthetase family. As to quaternary structure, homodimer.

The enzyme catalyses deamido-NAD(+) + NH4(+) + ATP = AMP + diphosphate + NAD(+) + H(+). Its pathway is cofactor biosynthesis; NAD(+) biosynthesis; NAD(+) from deamido-NAD(+) (ammonia route): step 1/1. Catalyzes the ATP-dependent amidation of deamido-NAD to form NAD. Uses ammonia as a nitrogen source. The sequence is that of NH(3)-dependent NAD(+) synthetase from Syntrophomonas wolfei subsp. wolfei (strain DSM 2245B / Goettingen).